Consider the following 61-residue polypeptide: Large ribosomal subunit protein uL29 (61 aa).

It belongs to the universal ribosomal protein uL29 family.

The sequence is that of Large ribosomal subunit protein uL29 from Stenotrophomonas maltophilia (strain R551-3).